A 970-amino-acid chain; its full sequence is Pentatricopeptide repeat-containing protein At1g18485 (970 aa).

19 PPR repeats span residues Asp-119–Lys-149, Asn-150–Pro-185, Asp-186–Glu-220, Asp-221–Arg-251, Asn-252–Glu-282, Asp-291–Lys-325, Glu-326–Lys-356, Asn-357–Val-391, Asp-394–Tyr-428, Asn-429–Lys-459, Thr-460–Pro-494, Asp-495–Arg-529, Asp-530–Lys-560, Ser-561–Leu-595, Gly-597–Asp-630, Asp-631–Lys-661, Ser-662–Pro-696, Asp-697–Ser-727, and Asn-733–Glu-764. A type E motif region spans residues Trp-770–Arg-845. Residues Lys-846–Ser-875 are type E(+) motif. The interval Lys-876–Trp-970 is type DYW motif.

It belongs to the PPR family. PCMP-H subfamily.

This chain is Pentatricopeptide repeat-containing protein At1g18485 (PCMP-H8), found in Arabidopsis thaliana (Mouse-ear cress).